The primary structure comprises 327 residues: Probable cell division protein WhiA (327 aa).

The segment at residues 277 to 310 (EELGRLADPPMTKDAVAGRIRRLLSMADRKAKQD) is a DNA-binding region (H-T-H motif). Residues 304-327 (DRKAKQDGIPDTESAVTPDLLEDA) are disordered.

This sequence belongs to the WhiA family.

Its function is as follows. Involved in cell division and chromosome segregation. In Mycolicibacterium vanbaalenii (strain DSM 7251 / JCM 13017 / BCRC 16820 / KCTC 9966 / NRRL B-24157 / PYR-1) (Mycobacterium vanbaalenii), this protein is Probable cell division protein WhiA.